We begin with the raw amino-acid sequence, 79 residues long: MLILTRKLGESIVIGDQIQITLLDIKGKHVRIGVNAPKGIAVHRGEVYEMIQDENKKAFESDVKNSEMLSALWAQVKIL.

It belongs to the CsrA/RsmA family. As to quaternary structure, homodimer; the beta-strands of each monomer intercalate to form a hydrophobic core, while the alpha-helices form wings that extend away from the core.

It is found in the cytoplasm. Functionally, a translational regulator that binds mRNA to regulate translation initiation and/or mRNA stability. Usually binds in the 5'-UTR at or near the Shine-Dalgarno sequence preventing ribosome-binding, thus repressing translation. Its main target seems to be the major flagellin gene, while its function is anatagonized by FliW. The chain is Translational regulator CsrA from Syntrophus aciditrophicus (strain SB).